The sequence spans 243 residues: Anti-H(O) lectin 2 (243 aa).

An N-linked (GlcNAc...) asparagine glycan is attached at Asn115. 2 residues coordinate Mn(2+): Glu127 and Asp129. Ca(2+)-binding residues include Asp129, Asn136, and Asp139. 2 residues coordinate Mn(2+): Asp139 and His144.

Belongs to the leguminous lectin family. Homodimer.

In terms of biological role, lactose- or galactose-binding anti-H(O) lectin. In Cytisophyllum sessilifolium (Sessile-leaved cytisus), this protein is Anti-H(O) lectin 2.